The primary structure comprises 236 residues: Ubiquinone biosynthesis O-methyltransferase (236 aa).

The S-adenosyl-L-methionine site is built by Arg-36, Gly-60, Asp-81, and Leu-123.

This sequence belongs to the methyltransferase superfamily. UbiG/COQ3 family.

The catalysed reaction is a 3-demethylubiquinol + S-adenosyl-L-methionine = a ubiquinol + S-adenosyl-L-homocysteine + H(+). It catalyses the reaction a 3-(all-trans-polyprenyl)benzene-1,2-diol + S-adenosyl-L-methionine = a 2-methoxy-6-(all-trans-polyprenyl)phenol + S-adenosyl-L-homocysteine + H(+). Its pathway is cofactor biosynthesis; ubiquinone biosynthesis. Its function is as follows. O-methyltransferase that catalyzes the 2 O-methylation steps in the ubiquinone biosynthetic pathway. The protein is Ubiquinone biosynthesis O-methyltransferase of Rickettsia canadensis (strain McKiel).